The chain runs to 480 residues: Ribosome assembly protein rrb1 (480 aa).

Disordered stretches follow at residues 1 to 78 (MSKR…WLPG) and 155 to 176 (QHDE…ILEH). 2 stretches are compositionally biased toward acidic residues: residues 28-52 (VDTE…YIEA) and 158-172 (ENDD…EEDP). Ser163 and Ser166 each carry phosphoserine. WD repeat units follow at residues 183–225 (GACN…RSLD), 289–329 (SHTA…KTSA), 334–375 (AHPG…SSSS), 385–425 (WHRA…DEEE), and 446–480 (MGQQ…TITF).

Associates with ribosomal protein L3.

The protein localises to the cytoplasm. The protein resides in the nucleus. Its subcellular location is the nucleolus. Involved in regulation of L3 expression and stability and plays a role in early 60S ribosomal subunit assembly. May be required for proper assembly of pre-ribosomal particles during early ribosome biogenesis, presumably by targeting L3 onto the 35S precursor rRNA. The polypeptide is Ribosome assembly protein rrb1 (rrb1) (Schizosaccharomyces pombe (strain 972 / ATCC 24843) (Fission yeast)).